The sequence spans 114 residues: Large ribosomal subunit protein bL19 (114 aa).

Belongs to the bacterial ribosomal protein bL19 family.

In terms of biological role, this protein is located at the 30S-50S ribosomal subunit interface and may play a role in the structure and function of the aminoacyl-tRNA binding site. This chain is Large ribosomal subunit protein bL19, found in Bacillus cereus (strain AH187).